We begin with the raw amino-acid sequence, 104 residues long: Protein RnfH (104 aa).

Residues 80 to 104 form a disordered region; that stretch reads PLTADPKLNRKRRAKEKASAGKASN.

The protein belongs to the UPF0125 (RnfH) family.

The polypeptide is Protein RnfH (Alcanivorax borkumensis (strain ATCC 700651 / DSM 11573 / NCIMB 13689 / SK2)).